A 98-amino-acid chain; its full sequence is DNA-binding protein Fis (98 aa).

The segment at residues 74-93 (QTRAATMMGINRGTLRKKLK) is a DNA-binding region (H-T-H motif).

This sequence belongs to the transcriptional regulatory Fis family. Homodimer.

In terms of biological role, activates ribosomal RNA transcription. Plays a direct role in upstream activation of rRNA promoters. This chain is DNA-binding protein Fis, found in Photobacterium profundum (strain SS9).